The sequence spans 419 residues: Zinc finger protein Pegasus (419 aa).

A Glycyl lysine isopeptide (Lys-Gly) (interchain with G-Cter in SUMO2) cross-link involves residue lysine 5. 3 C2H2-type zinc fingers span residues 82–104 (LKCRYCNYASKGTARLIEHIRIH), 110–132 (HRCHLCPFASAYERHLEAHMRSH), and 138–161 (YKCELCSFRCSDRSNLSHHRRRKH). A Glycyl lysine isopeptide (Lys-Gly) (interchain with G-Cter in SUMO2) cross-link involves residue lysine 185. Over residues 223–236 (QTDSYESMAKTTPT) the composition is skewed to polar residues. 2 disordered regions span residues 223 to 245 (QTDSYESMAKTTPTGGLPRDPQE) and 288 to 356 (MQQP…PTLP). Over residues 289-311 (QQPSAQAVVSAVSASLPQSSSPA) the composition is skewed to low complexity. Polar residues predominate over residues 332–349 (SEPSAHTSTPSMGNSQPS). 2 consecutive C2H2-type zinc fingers follow at residues 364-386 (HHCQHCDMYFADNILYTIHMGCH) and 392-416 (FQCNICGCKCKNKYDFACHFARGQH).

The protein belongs to the Ikaros C2H2-type zinc-finger protein family. Self-associates. Interacts with other family members; IKZF1, IKZF2, IKZF3 and IKZF4.

It localises to the nucleus. Functionally, transcriptional repressor that binds the core 5'GNNTGTNG-3' DNA consensus sequence. Involved in megakaryocyte differentiation. The sequence is that of Zinc finger protein Pegasus (IKZF5) from Bos taurus (Bovine).